Consider the following 257-residue polypeptide: Probable enoyl-CoA hydratase (257 aa).

This sequence belongs to the enoyl-CoA hydratase/isomerase family.

The catalysed reaction is a (3S)-3-hydroxyacyl-CoA = a (2E)-enoyl-CoA + H2O. It carries out the reaction a 4-saturated-(3S)-3-hydroxyacyl-CoA = a (3E)-enoyl-CoA + H2O. Functionally, could possibly oxidize fatty acids using specific components. In Rhizobium meliloti (strain 1021) (Ensifer meliloti), this protein is Probable enoyl-CoA hydratase (fadB1).